Consider the following 181-residue polypeptide: Peptide deformylase 1 (181 aa).

Positions 106 and 148 each coordinate Fe cation. Residue Glu149 is part of the active site. Fe cation is bound at residue His152.

This sequence belongs to the polypeptide deformylase family. The cofactor is Fe(2+).

The catalysed reaction is N-terminal N-formyl-L-methionyl-[peptide] + H2O = N-terminal L-methionyl-[peptide] + formate. Its function is as follows. Removes the formyl group from the N-terminal Met of newly synthesized proteins. Requires at least a dipeptide for an efficient rate of reaction. N-terminal L-methionine is a prerequisite for activity but the enzyme has broad specificity at other positions. The chain is Peptide deformylase 1 from Burkholderia multivorans (strain ATCC 17616 / 249).